The sequence spans 84 residues: DNA-directed RNA polymerase subunit Rpo5 (84 aa).

The protein belongs to the archaeal Rpo5/eukaryotic RPB5 RNA polymerase subunit family. In terms of assembly, part of the 13-subunit RNA polymerase complex.

It localises to the cytoplasm. It carries out the reaction RNA(n) + a ribonucleoside 5'-triphosphate = RNA(n+1) + diphosphate. Its function is as follows. DNA-dependent RNA polymerase (RNAP) catalyzes the transcription of DNA into RNA using the four ribonucleoside triphosphates as substrates. The chain is DNA-directed RNA polymerase subunit Rpo5 from Saccharolobus solfataricus (strain ATCC 35092 / DSM 1617 / JCM 11322 / P2) (Sulfolobus solfataricus).